A 571-amino-acid polypeptide reads, in one-letter code: Glutamate--tRNA ligase (571 aa).

Positions 110–120 (PNPNGPATLGS) match the 'HIGH' region motif.

The protein belongs to the class-I aminoacyl-tRNA synthetase family. Glutamate--tRNA ligase type 2 subfamily.

It localises to the cytoplasm. It catalyses the reaction tRNA(Glu) + L-glutamate + ATP = L-glutamyl-tRNA(Glu) + AMP + diphosphate. In terms of biological role, catalyzes the attachment of glutamate to tRNA(Glu) in a two-step reaction: glutamate is first activated by ATP to form Glu-AMP and then transferred to the acceptor end of tRNA(Glu). In Methanosarcina mazei (strain ATCC BAA-159 / DSM 3647 / Goe1 / Go1 / JCM 11833 / OCM 88) (Methanosarcina frisia), this protein is Glutamate--tRNA ligase.